The sequence spans 192 residues: MEYRSLMLDDFLSRFQLLRPQINRETLNHRQAAVLIPIVRRPQPGLLLTQRSIHLRKHAGQVAFPGGAVDDTDASVIAAALREAEEEVAIPPSAVEVIGVLPPVDSVTGYQVTPVVGIIPPDLPYRASEDEVSAVFEMPLAQALHLGRYHPLDIYRRGDSHRVWLSWYEQYFVWGMTAGIIRELALQIGVKP.

Positions 29–160 constitute a Nudix hydrolase domain; sequence HRQAAVLIPI…PLDIYRRGDS (132 aa). The Nudix box motif lies at 67 to 89; that stretch reads GAVDDTDASVIAAALREAEEEVA. Residues Glu83 and Glu87 each coordinate Mg(2+).

The protein belongs to the Nudix hydrolase family. PCD1 subfamily. Mn(2+) is required as a cofactor. It depends on Mg(2+) as a cofactor.

In terms of biological role, probably mediates the hydrolysis of some nucleoside diphosphate derivatives. This is an uncharacterized protein from Shigella sonnei (strain Ss046).